Here is a 304-residue protein sequence, read N- to C-terminus: Ornithine carbamoyltransferase (304 aa).

Carbamoyl phosphate-binding positions include Ser-53 to Thr-56, Gln-80, Arg-104, and His-131 to Gln-134. L-ornithine is bound by residues Asn-162, Asp-222, and Ser-226–Met-227. Residues Cys-261–Leu-262 and Arg-289 contribute to the carbamoyl phosphate site.

The protein belongs to the aspartate/ornithine carbamoyltransferase superfamily. OTCase family.

Its subcellular location is the cytoplasm. It catalyses the reaction carbamoyl phosphate + L-ornithine = L-citrulline + phosphate + H(+). It participates in amino-acid biosynthesis; L-arginine biosynthesis; L-arginine from L-ornithine and carbamoyl phosphate: step 1/3. Its function is as follows. Reversibly catalyzes the transfer of the carbamoyl group from carbamoyl phosphate (CP) to the N(epsilon) atom of ornithine (ORN) to produce L-citrulline. This is Ornithine carbamoyltransferase from Rhizobium johnstonii (strain DSM 114642 / LMG 32736 / 3841) (Rhizobium leguminosarum bv. viciae).